Consider the following 300-residue polypeptide: 4-hydroxy-tetrahydrodipicolinate synthase (300 aa).

Thr-45 is a pyruvate binding site. Residue Tyr-140 is the Proton donor/acceptor of the active site. The active-site Schiff-base intermediate with substrate is Lys-169. Pyruvate is bound at residue Ile-210.

It belongs to the DapA family. In terms of assembly, homotetramer; dimer of dimers.

The protein resides in the cytoplasm. It catalyses the reaction L-aspartate 4-semialdehyde + pyruvate = (2S,4S)-4-hydroxy-2,3,4,5-tetrahydrodipicolinate + H2O + H(+). It functions in the pathway amino-acid biosynthesis; L-lysine biosynthesis via DAP pathway; (S)-tetrahydrodipicolinate from L-aspartate: step 3/4. Functionally, catalyzes the condensation of (S)-aspartate-beta-semialdehyde [(S)-ASA] and pyruvate to 4-hydroxy-tetrahydrodipicolinate (HTPA). In Helicobacter pylori (strain J99 / ATCC 700824) (Campylobacter pylori J99), this protein is 4-hydroxy-tetrahydrodipicolinate synthase.